The following is a 439-amino-acid chain: GTPase Der (439 aa).

EngA-type G domains lie at 2–168 and 181–357; these read ATVL…EEKG and IKVA…ASYT. GTP contacts are provided by residues 8-15, 55-59, 118-121, 187-194, 234-238, and 300-303; these read GKPNVGKS, DTCGV, NKTE, GRPNVGKS, DTAGL, and NKWD. The KH-like domain maps to 358–439; that stretch reads TKVPSSAINS…PIFLKFKRSR (82 aa).

Belongs to the TRAFAC class TrmE-Era-EngA-EngB-Septin-like GTPase superfamily. EngA (Der) GTPase family. Associates with the 50S ribosomal subunit.

Functionally, GTPase that plays an essential role in the late steps of ribosome biogenesis. This is GTPase Der from Thermotoga petrophila (strain ATCC BAA-488 / DSM 13995 / JCM 10881 / RKU-1).